The following is a 101-amino-acid chain: uncharacterized protein (101 aa).

This is an uncharacterized protein from Bacillus subtilis (strain 168).